The chain runs to 570 residues: Frizzled-2 (570 aa).

The signal sequence occupies residues 1 to 28; it reads MRARSALPRSALPRLLLPLLLLPAAGPA. At 29-252 the chain is on the extracellular side; that stretch reads QFHGEKGISI…QEETRFARLW (224 aa). The FZ domain occupies 39-158; it reads PDHGFCQPIS…HGAEQICVGQ (120 aa). 5 disulfide bridges follow: Cys-44-Cys-105, Cys-52-Cys-98, Cys-89-Cys-126, Cys-115-Cys-155, and Cys-119-Cys-143. A glycan (N-linked (GlcNAc...) asparagine) is linked at Asn-58. N-linked (GlcNAc...) asparagine glycosylation is present at Asn-159. The segment at 166–194 is disordered; that stretch reads PALLTTAPPSGLQPGAGGTPGGPGGGGSP. The segment covering 179-193 has biased composition (gly residues); that stretch reads PGAGGTPGGPGGGGS. Residues 253–273 form a helical membrane-spanning segment; that stretch reads ILTWSVLCCASTFFTVTTYLV. Topologically, residues 274–284 are cytoplasmic; the sequence is DMQRFRYPERP. A helical transmembrane segment spans residues 285–305; it reads IIFLSGCYTMVSVAYIAGFVL. Over 306 to 332 the chain is Extracellular; the sequence is QERVVCNERFSEDGYRTVVQGTKKEGC. A helical transmembrane segment spans residues 333 to 353; that stretch reads TILFMMLYFFSMASSIWWVIL. Topologically, residues 354–375 are cytoplasmic; that stretch reads SLTWFLAAGMKWGHEAIEANSQ. Residues 376 to 396 form a helical membrane-spanning segment; sequence YFHLAAWAVPAVKTITILAMG. The Extracellular segment spans residues 397–419; the sequence is QIDGDLLSGVCFVGLNSLDPLRG. The chain crosses the membrane as a helical span at residues 420–440; it reads FVLAPLFVYLFIGTSFLLAGF. The Cytoplasmic portion of the chain corresponds to 441–466; it reads VSLFRIRTIMKHDGTKTEKLERLMVR. A helical transmembrane segment spans residues 467 to 487; the sequence is IGVFSVLYTVPATIVIACYFY. Topologically, residues 488–524 are extracellular; sequence EQAFREHWERSWVSQHCKSLAIPCPAHYTPRMSPDFT. Residues 525–545 traverse the membrane as a helical segment; that stretch reads VYMIKYLMTLIVGITSGFWIW. The Cytoplasmic portion of the chain corresponds to 546 to 570; it reads SGKTLHSWRKFYTRLTNSRHGETTV. Residues 548-553 carry the Lys-Thr-X-X-X-Trp motif, mediates interaction with the PDZ domain of Dvl family members motif; the sequence is KTLHSW. The PDZ-binding signature appears at 568-570; sequence TTV.

Belongs to the G-protein coupled receptor Fz/Smo family. Post-translationally, ubiquitinated by ZNRF3, leading to its degradation by the proteasome. Expressed in embryonic and adult heart, lung, chondrocytes and brain. Also expressed in the developing gastrointestinal tract (strongest in foregut), much weaker expression in the adult. No expression in fetal liver and adult spleen. Up-regulated in esophageal squamous cell carcinomas.

The protein resides in the membrane. It is found in the cell membrane. Receptor for Wnt proteins. Most of frizzled receptors are coupled to the beta-catenin canonical signaling pathway, which leads to the activation of disheveled proteins, inhibition of GSK-3 kinase, nuclear accumulation of beta-catenin and activation of Wnt target genes. A second signaling pathway involving PKC and calcium fluxes has been seen for some family members, but it is not yet clear if it represents a distinct pathway or if it can be integrated in the canonical pathway, as PKC seems to be required for Wnt-mediated inactivation of GSK-3 kinase. Both pathways seem to involve interactions with G-proteins. May be involved in transduction and intercellular transmission of polarity information during tissue morphogenesis and/or in differentiated tissues. The polypeptide is Frizzled-2 (Fzd2) (Mus musculus (Mouse)).